A 315-amino-acid chain; its full sequence is Outer membrane protease OmpP (315 aa).

The signal sequence occupies residues 1–23 (MQTKLLAIMLAAPVVFSSQEASA). Catalysis depends on residues Asp-103, Asp-105, Asp-230, and His-232.

It belongs to the peptidase A26 family.

The protein resides in the cell outer membrane. Functionally, protease; also acts as a receptor for bacteriophage Ox2. This is Outer membrane protease OmpP (ompP) from Escherichia coli (strain K12).